The chain runs to 311 residues: Putative dihydroorotate dehydrogenase A (fumarate) (311 aa).

Residues lysine 45, asparagine 69–leucine 73, and asparagine 128 contribute to the substrate site. Lysine 45 to threonine 46 provides a ligand contact to FMN. Asparagine 128 is an FMN binding site. Cysteine 131 serves as the catalytic Nucleophile. FMN contacts are provided by lysine 165 and valine 193. Asparagine 194 to serine 195 contacts substrate. Residues glycine 220, glycine 248–glycine 249, and glycine 270–threonine 271 each bind FMN.

The protein belongs to the dihydroorotate dehydrogenase family. Type 1 subfamily. Homodimer. It depends on FMN as a cofactor.

The protein resides in the cytoplasm. The enzyme catalyses (S)-dihydroorotate + fumarate = orotate + succinate. It participates in pyrimidine metabolism; UMP biosynthesis via de novo pathway. Catalyzes the conversion of dihydroorotate to orotate with fumarate as the electron acceptor. The protein is Putative dihydroorotate dehydrogenase A (fumarate) (pyrD) of Streptococcus pyogenes serotype M1.